The following is an 87-amino-acid chain: U15-lycotoxin-Ls1f (87 aa).

Positions 1-20 (MNSKIFAVLLLLGLLSCVLS) are cleaved as a signal peptide. Residues 21-66 (DQYCPKSSITACKKMNIRNDCCKDDDCTGGSWCCATPCGNFCKYPT) enclose the WAP domain. Cystine bridges form between cysteine 24-cysteine 54, cysteine 32-cysteine 58, cysteine 41-cysteine 53, cysteine 42-cysteine 80, and cysteine 47-cysteine 62.

It belongs to the venom protein 11 family. 01 (wap-1) subfamily. In terms of processing, contains 5 disulfide bonds. Expressed by the venom gland.

The protein localises to the secreted. In terms of biological role, has antibacterial activity. In Lycosa singoriensis (Wolf spider), this protein is U15-lycotoxin-Ls1f.